The chain runs to 295 residues: Cyclic dipyrimidine nucleotide synthase CdnE (295 aa).

The tract at residues 1 to 25 is disordered; the sequence is MSIDWEQTFRKWSKPSSETESTKAE. Residues Gln-51, Ser-53, and Asn-59 each coordinate UTP. Mg(2+)-binding residues include Asp-65 and Asp-67. Residues Asp-67, Asp-124, and Lys-125 each coordinate UTP. Positions 128 and 139 each coordinate Mg(2+). UTP-binding residues include Asp-139, Asn-173, Lys-201, and Ser-220. Residues 274-276 carry the Pyrimidine specificity motif (R/Q)xW in donor pocket motif; sequence QMW.

Belongs to the CD-NTase family. E02 subfamily. The cofactor is Mg(2+).

It carries out the reaction 2 UTP = c-di-UMP + 2 diphosphate. The catalysed reaction is UTP + CTP = cyclic CMP-UMP + 2 diphosphate. Its function is as follows. Cyclic nucleotide synthase (second messenger synthase) of a CBASS antivirus system. CBASS (cyclic oligonucleotide-based antiphage signaling system) provides immunity against bacteriophage. The CD-NTase protein synthesizes cyclic nucleotides in response to infection; these serve as specific second messenger signals. The signals activate a diverse range of effectors, leading to bacterial cell death and thus abortive phage infection. A type I-B(UU) CBASS system. Cyclic dinucleotide synthase that catalyzes the synthesis of 3',3'-cyclic UMP-UMP (c-di-UMP) as the major product, and of 3',3'-cyclic CMP-UMP as a minor product, which are second messengers for cell signal transduction. This Legionella pneumophila protein is Cyclic dipyrimidine nucleotide synthase CdnE.